Here is a 628-residue protein sequence, read N- to C-terminus: MAIEKLPPQLANQIAAGEVVERPASVIKELVENSLDAGATRVDIEIEKGGAKLIRIRDNGSGIPKEDLSLALSRHATSKLKSLDDLEAILSFGFRGEALASISSVSRLILTSRTAEQTEAWQAHAEGTEMAVKVLPAAHPVGSTVEAVDLFFNTPARRRFLKSDKTEFTHIDEWLKRIALARRDIHFTLKHNGKTVRNYRPANTEIQYIQRLGQICGKAFAETCLRIECEHNDLKLSGYLQSPSAASGYSETQYFYVNGRLVKDRLVNHAVRQAFSQYAEGISPGYVLMLELDPHQVDVNVHPAKHEVRFHQSRYVHDYILQALQSAMAQSTQLSVDIEPESEQTTAWQTSPTRGAVAPSHYVDESKSKPSAVFDVRERHSSASQAGYSGGGGSYRSQLKPASRNSEVSLPSQTSIRAYGELLSTDSVQTQSTNVPLRPAAHQAGMMSTSHGAASMPPVIAGQYWVLVKEDKISLLDIAMVAKAALKAEIAAKLAQGIIGQPLLMPVAISVDDDWPEIIDNREQLLRKLGIELSIRLGQLIIKKVPPYLRDSQLAALIPELLEWIRLELPSDAAVIKWLAEQAANRFTSASEAWFAFSALPDDVQCELYNHSQELPWEQWMKENQSDR.

The interval 335-411 (SVDIEPESEQ…ASRNSEVSLP (77 aa)) is disordered. The segment covering 343-353 (EQTTAWQTSPT) has biased composition (polar residues).

This sequence belongs to the DNA mismatch repair MutL/HexB family.

Its function is as follows. This protein is involved in the repair of mismatches in DNA. It is required for dam-dependent methyl-directed DNA mismatch repair. May act as a 'molecular matchmaker', a protein that promotes the formation of a stable complex between two or more DNA-binding proteins in an ATP-dependent manner without itself being part of a final effector complex. This chain is DNA mismatch repair protein MutL, found in Shewanella pealeana (strain ATCC 700345 / ANG-SQ1).